Reading from the N-terminus, the 342-residue chain is GTPase Obg (342 aa).

One can recognise an Obg domain in the interval Met-1 to Leu-159. Residues Ala-160 to Asp-330 form the OBG-type G domain. Residues Gly-166 to Ser-173, Phe-191 to Ile-195, Asp-213 to Gly-216, Asn-280 to Asp-283, and Ser-311 to Val-313 each bind GTP. Mg(2+) is bound by residues Ser-173 and Thr-193.

The protein belongs to the TRAFAC class OBG-HflX-like GTPase superfamily. OBG GTPase family. In terms of assembly, monomer. Mg(2+) is required as a cofactor.

It localises to the cytoplasm. Functionally, an essential GTPase which binds GTP, GDP and possibly (p)ppGpp with moderate affinity, with high nucleotide exchange rates and a fairly low GTP hydrolysis rate. Plays a role in control of the cell cycle, stress response, ribosome biogenesis and in those bacteria that undergo differentiation, in morphogenesis control. The sequence is that of GTPase Obg from Nostoc sp. (strain PCC 7120 / SAG 25.82 / UTEX 2576).